We begin with the raw amino-acid sequence, 436 residues long: Immediate-early phosphoprotein 57 (436 aa).

A disordered region spans residues 71–140 (VPKRERSKTP…TPSNQNPLTE (70 aa)). Over residues 104–119 (QRPAPSARSRRPQPYS) the composition is skewed to low complexity. A compositionally biased stretch (polar residues) spans 127-138 (KPQSTPSNQNPL).

Belongs to the herpesviridae UL69 family.

The protein resides in the host nucleus. It is found in the host cytoplasm. Its function is as follows. Acts at a post-transcriptional level to regulate viral gene expression. The polypeptide is Immediate-early phosphoprotein 57 (57) (Alcelaphine herpesvirus 1 (strain C500) (AlHV-1)).